The sequence spans 222 residues: MNVAILLAAGKGERMSENVPKQFLEIEGRMLFEYPLSTFLKSEAIDGVVIVTRREWFEVVEKRVFHEKVLGIVEGGDTRSQSVRSALEFLEKFSPSYVLVHDSARPFLRKKHVSEVLRRARETGAATLALKNSDALVRVENDRIEYIPRKGVYRILTPQAFSYEILKEAHENGGEWADDTEPVQKLGVKIALVEGDPLCFKVTFKEDLELARIIAREWERIP.

Belongs to the IspD/TarI cytidylyltransferase family. IspD subfamily.

The enzyme catalyses 2-C-methyl-D-erythritol 4-phosphate + CTP + H(+) = 4-CDP-2-C-methyl-D-erythritol + diphosphate. Its pathway is isoprenoid biosynthesis; isopentenyl diphosphate biosynthesis via DXP pathway; isopentenyl diphosphate from 1-deoxy-D-xylulose 5-phosphate: step 2/6. Its function is as follows. Catalyzes the formation of 4-diphosphocytidyl-2-C-methyl-D-erythritol from CTP and 2-C-methyl-D-erythritol 4-phosphate (MEP). The polypeptide is 2-C-methyl-D-erythritol 4-phosphate cytidylyltransferase (Thermotoga sp. (strain RQ2)).